An 823-amino-acid polypeptide reads, in one-letter code: Transcription factor SPT20 homolog-like 1 (823 aa).

5 disordered regions span residues 246–273, 369–524, 560–601, 631–669, and 720–757; these read SVKPQQEQSDCPPPPELRVSTSGQKEER, PRKK…AAQP, GSSF…AVQA, VLTGPQQQSHQLVSLQQLQQPTAAHPPQPGPQGSALGLS, and LRQQQPQPQPPKLQLQPQWQPKPRQEQPQSQQQQPQHI. The segment covering 423–440 has biased composition (polar residues); the sequence is SHSSSGPASVSQLSSWKT. Composition is skewed to low complexity over residues 469–509, 568–582, and 636–650; these read SSSG…QKPS, APGSGAPAPAGISGS, and QQQSHQLVSLQQLQQ.

It belongs to the SPT20 family.

The protein is Transcription factor SPT20 homolog-like 1 (SUPT20HL1) of Homo sapiens (Human).